Consider the following 407-residue polypeptide: Transcriptional regulator UL34 (407 aa).

Disordered stretches follow at residues 268–330 and 388–407; these read AAGP…EELF and SPSV…PLCI. Over residues 273 to 286 the composition is skewed to acidic residues; it reads EADENNDEGEEDDD. Basic and acidic residues predominate over residues 287-301; the sequence is ELRHSDPAPLHESKK. Residues 302–312 show a composition bias toward basic residues; that stretch reads PRNARRPRTRV.

It belongs to the HHV-5 UL34 protein family.

It localises to the host nucleus. Acts as a transcriptional repressor of the US3 gene expression through a specific DNA sequence named the transcriptional repressive element (tre). In Human cytomegalovirus (strain Towne) (HHV-5), this protein is Transcriptional regulator UL34 (UL34).